The sequence spans 207 residues: Large ribosomal subunit protein uL4 (207 aa).

The tract at residues 47–78 is disordered; it reads GTHKVKNRSEVRGGGRKPWRQKGTGRARQGSI. Residues 60 to 71 show a composition bias toward basic residues; it reads GGRKPWRQKGTG.

It belongs to the universal ribosomal protein uL4 family. As to quaternary structure, part of the 50S ribosomal subunit.

One of the primary rRNA binding proteins, this protein initially binds near the 5'-end of the 23S rRNA. It is important during the early stages of 50S assembly. It makes multiple contacts with different domains of the 23S rRNA in the assembled 50S subunit and ribosome. In terms of biological role, forms part of the polypeptide exit tunnel. The polypeptide is Large ribosomal subunit protein uL4 (Listeria innocua serovar 6a (strain ATCC BAA-680 / CLIP 11262)).